We begin with the raw amino-acid sequence, 424 residues long: GTPase HflX (424 aa).

A Hflx-type G domain is found at Y194–V364. Residues G200 to T207, F225 to S229, D246 to G249, N314 to D317, and S342 to A344 each bind GTP. Mg(2+)-binding residues include T207 and T227.

The protein belongs to the TRAFAC class OBG-HflX-like GTPase superfamily. HflX GTPase family. In terms of assembly, monomer. Associates with the 50S ribosomal subunit. It depends on Mg(2+) as a cofactor.

Its subcellular location is the cytoplasm. GTPase that associates with the 50S ribosomal subunit and may have a role during protein synthesis or ribosome biogenesis. The protein is GTPase HflX of Thermofilum pendens (strain DSM 2475 / Hrk 5).